The sequence spans 360 residues: MKISSLSILPLLGVVSAGIHGKKPNGPTYAGTNPGCTWYLDLVDDSYTCENIESQWDLSHEAFVAWNPGVKKDCSGLKVGLSVCVEAPMESITATPTSEASTSSETSSASPTASRPPLPSPTQDGLVSNCTKFHQAVSGDTCSKIISRYKPITLDQFIEWNPALEKDCSGLWSGYYYCVGIPGTPSAPLTSMPASTAHSGTNSNATVKPAAPGPTQDGIANNCQRWHKAVSGNTCASLLKQYGTFTLEEFIKWNPAVGEDCSGLWLNYYYCIGIPGTPTTKNSVPKPTTTACNTPGLPSPTQPGAICQCSKWHQVRQGETCDSITRNYRISISKFKEWNPNVGKDCYGLWLRYYVCVGGK.

The signal sequence occupies residues 1-21 (MKISSLSILPLLGVVSAGIHG). Positions 37–85 (TWYLDLVDDSYTCENIESQWDLSHEAFVAWNPGVKKDCSGLKVGLSVCV) constitute a LysM 1 domain. Residues 94–113 (ATPTSEASTSSETSSASPTA) show a composition bias toward low complexity. Residues 94–125 (ATPTSEASTSSETSSASPTASRPPLPSPTQDG) form a disordered region. N-linked (GlcNAc...) asparagine glycosylation occurs at asparagine 129. The LysM 2 domain occupies 132 to 179 (KFHQAVSGDTCSKIISRYKPITLDQFIEWNPALEKDCSGLWSGYYYCV). The N-linked (GlcNAc...) asparagine glycan is linked to asparagine 204. LysM domains lie at 225–272 (RWHK…YYCI) and 311–357 (KWHQ…YVCV).

This sequence belongs to the secreted LysM effector family.

The protein resides in the secreted. Its subcellular location is the cell wall. Secreted effector that binds two substrates, chitin and N-linked oligosaccharides associated with human skin glycoproteins. Could provide the pathogen with three important functions including shielding host cell wall chitin from the human immune system, shielding the pathogen's glycoproteins from host degradation and immune surveillance, and helping facilitate pathogen adhesion to human skin. In Trichophyton rubrum (strain ATCC MYA-4607 / CBS 118892) (Athlete's foot fungus), this protein is Secreted LysM effector LysM2.